We begin with the raw amino-acid sequence, 437 residues long: MSHEAEEDLLEYSDNEQEVQVDNKATEVNAEGNGESQAKDSDKKGSYVGIHSTGFKDFLLKPELSRAIIDCGFEHPSEVQQHTIPQSIHGTDVLCQAKSGLGKTAVFVLSTLQQLDPVQGEVSVVVLCNARELAYQIRNEYLRFSKYMPDVKTAVFYGGTEYKNDIDLLSKKETVPHIIVATPGRLKALVRDKHIDLSHVKNFVIDECDKVLEELDMRRDVQDIFRATPRDKQVMMFSATLSQEIRPICRRFLQNPLEIFVDDEAKLTLHGLQQYYIKLNEKEKNRKLAQLLDDLEFNQVIIFVKSTVRANELTKLLNASNFPAITVHGHMKQEERIARYKAFKEFEKRICVSTDVFGRGIDIERINLAINYDMPNEADQYLHRVGRAGRFGTKGLAISMISSEDDEQVLAKIQERFDVKITEFPEEGVDPSTYLNT.

Positions 1-19 (MSHEAEEDLLEYSDNEQEV) are enriched in acidic residues. A disordered region spans residues 1 to 45 (MSHEAEEDLLEYSDNEQEVQVDNKATEVNAEGNGESQAKDSDKKG). Residues 53–81 (TGFKDFLLKPELSRAIIDCGFEHPSEVQQ) carry the Q motif motif. The Helicase ATP-binding domain occupies 84-259 (IPQSIHGTDV…RRFLQNPLEI (176 aa)). 97 to 104 (AKSGLGKT) is an ATP binding site. The DECD box signature appears at 206-209 (DECD). The Helicase C-terminal domain maps to 287–432 (KLAQLLDDLE…EFPEEGVDPS (146 aa)).

Belongs to the DEAD box helicase family. DECD subfamily.

It localises to the nucleus. The catalysed reaction is ATP + H2O = ADP + phosphate + H(+). ATP-binding RNA helicase involved in transcription elongation and required for the export of mRNA out of the nucleus. SUB2 also plays a role in pre-mRNA splicing and spliceosome assembly. May be involved in rDNA and telomeric silencing, and maintenance of genome integrity. The polypeptide is ATP-dependent RNA helicase SUB2 (SUB2) (Kluyveromyces lactis (strain ATCC 8585 / CBS 2359 / DSM 70799 / NBRC 1267 / NRRL Y-1140 / WM37) (Yeast)).